Reading from the N-terminus, the 272-residue chain is Shikimate dehydrogenase (NADP(+)) (272 aa).

Shikimate contacts are provided by residues 14 to 16 (SKS) and T61. The Proton acceptor role is filled by K65. E77 lines the NADP(+) pocket. N86 and D102 together coordinate shikimate. NADP(+) is bound by residues 126–130 (GAGGA), 149–154 (NRTVSR), and M213. Position 215 (Y215) interacts with shikimate. Residue G237 coordinates NADP(+).

This sequence belongs to the shikimate dehydrogenase family. As to quaternary structure, homodimer.

It carries out the reaction shikimate + NADP(+) = 3-dehydroshikimate + NADPH + H(+). Its pathway is metabolic intermediate biosynthesis; chorismate biosynthesis; chorismate from D-erythrose 4-phosphate and phosphoenolpyruvate: step 4/7. Its function is as follows. Involved in the biosynthesis of the chorismate, which leads to the biosynthesis of aromatic amino acids. Catalyzes the reversible NADPH linked reduction of 3-dehydroshikimate (DHSA) to yield shikimate (SA). The sequence is that of Shikimate dehydrogenase (NADP(+)) from Escherichia coli O6:K15:H31 (strain 536 / UPEC).